We begin with the raw amino-acid sequence, 121 residues long: uncharacterized protein (121 aa).

Positions 43-86 (LKECSSHVAAFADCSKDKYISVVWECRELQQLMKNCLVEYTTSE) constitute a CHCH domain. 2 short sequence motifs (cx9C motif) span residues 46–56 (CSSHVAAFADC) and 68–78 (CRELQQLMKNC). Intrachain disulfides connect Cys46–Cys78 and Cys56–Cys68.

This sequence belongs to the CMC family.

This is an uncharacterized protein from Dictyostelium discoideum (Social amoeba).